The sequence spans 218 residues: Glutathione S-transferase Mu 4 (218 aa).

Positions 2–88 constitute a GST N-terminal domain; that stretch reads SMTLGYWDIR…YIARKHNLCG (87 aa). Glutathione is bound by residues 7-8, 46-50, 59-60, and 72-73; these read YW, WLNEK, NL, and QS. Residues 90-208 form the GST C-terminal domain; that stretch reads TEEEKIRVDI…KSSRFLPKPL (119 aa). Residue Y116 participates in substrate binding.

This sequence belongs to the GST superfamily. Mu family. In terms of assembly, homodimer. Expressed in a wide variety of tissues.

It is found in the cytoplasm. The catalysed reaction is RX + glutathione = an S-substituted glutathione + a halide anion + H(+). It carries out the reaction 1-chloro-2,4-dinitrobenzene + glutathione = 2,4-dinitrophenyl-S-glutathione + chloride + H(+). The enzyme catalyses (13S,14S)-epoxy-(4Z,7Z,9E,11E,16Z,19Z)-docosahexaenoate + glutathione = (13R)-S-glutathionyl-(14S)-hydroxy-(4Z,7Z,9E,11E,16Z,19Z)-docosahexaenoate. It catalyses the reaction leukotriene C4 = leukotriene A4 + glutathione. Its function is as follows. Conjugation of reduced glutathione to a wide number of exogenous and endogenous hydrophobic electrophiles. Catalyzes the conjugation of leukotriene A4 with reduced glutathione (GSH) to form leukotriene C4. Can also catalyze the transfer of a glutathionyl group from glutathione (GSH) to 13(S),14(S)-epoxy-docosahexaenoic acid to form maresin conjugate in tissue regeneration 1 (MCTR1), a bioactive lipid mediator that possess potent anti-inflammatory and proresolving actions. The polypeptide is Glutathione S-transferase Mu 4 (GSTM4) (Homo sapiens (Human)).